Consider the following 401-residue polypeptide: Tyrosine--tRNA ligase (401 aa).

Positions 42 to 51 (PTAPDLHLGH) match the 'HIGH' region motif. The 'KMSKS' region signature appears at 226–230 (KMSKS). K229 is an ATP binding site. The region spanning 336 to 397 (IALAQLLKQI…GKRRIAKLSI (62 aa)) is the S4 RNA-binding domain.

The protein belongs to the class-I aminoacyl-tRNA synthetase family. TyrS type 2 subfamily. In terms of assembly, homodimer.

Its subcellular location is the cytoplasm. The enzyme catalyses tRNA(Tyr) + L-tyrosine + ATP = L-tyrosyl-tRNA(Tyr) + AMP + diphosphate + H(+). Its function is as follows. Catalyzes the attachment of tyrosine to tRNA(Tyr) in a two-step reaction: tyrosine is first activated by ATP to form Tyr-AMP and then transferred to the acceptor end of tRNA(Tyr). In Legionella pneumophila subsp. pneumophila (strain Philadelphia 1 / ATCC 33152 / DSM 7513), this protein is Tyrosine--tRNA ligase.